Consider the following 2111-residue polypeptide: Glutamate synthase [NADH] (2111 aa).

The Nucleophile role is filled by Cys-69. In terms of domain architecture, Glutamine amidotransferase type-2 spans Cys-69–Lys-469. Residues Gly-969–Gly-990 form a disordered region. Val-1139 to Gly-1191 provides a ligand contact to FMN. Cys-1192, Cys-1198, and Cys-1203 together coordinate [3Fe-4S] cluster.

The protein belongs to the glutamate synthase family. As to quaternary structure, homotrimer. [3Fe-4S] cluster serves as cofactor. The cofactor is FAD. FMN is required as a cofactor.

The protein localises to the cytoplasm. The enzyme catalyses 2 L-glutamate + NAD(+) = L-glutamine + 2-oxoglutarate + NADH + H(+). The protein operates within amino-acid biosynthesis; L-glutamate biosynthesis via GLT pathway; L-glutamate from 2-oxoglutarate and L-glutamine (NAD(+) route): step 1/1. It participates in energy metabolism; nitrogen metabolism. In the presence of 10 mM allantoin, the activity is reduced more than 25%. Forms L-glutamate from L-glutamine and 2-oxoglutarate. Represents an alternative pathway to L-glutamate dehydrogenase for the biosynthesis of L-glutamate. Participates with glutamine synthetase in ammonia assimilation processes. The enzyme is specific for NADH, L-glutamine and 2-oxoglutarate. This Schizosaccharomyces pombe (strain 972 / ATCC 24843) (Fission yeast) protein is Glutamate synthase [NADH] (glt1).